A 185-amino-acid polypeptide reads, in one-letter code: Ribosome-recycling factor (185 aa).

The protein belongs to the RRF family.

The protein resides in the cytoplasm. Functionally, responsible for the release of ribosomes from messenger RNA at the termination of protein biosynthesis. May increase the efficiency of translation by recycling ribosomes from one round of translation to another. The polypeptide is Ribosome-recycling factor (Salinispora tropica (strain ATCC BAA-916 / DSM 44818 / JCM 13857 / NBRC 105044 / CNB-440)).